A 311-amino-acid chain; its full sequence is Malate dehydrogenase (311 aa).

NAD(+) contacts are provided by residues 7–13 (GAAGGIG) and aspartate 34. Positions 81 and 87 each coordinate substrate. NAD(+) is bound by residues asparagine 94 and 117 to 119 (ITN). Residues asparagine 119 and arginine 153 each contribute to the substrate site. Catalysis depends on histidine 177, which acts as the Proton acceptor. NAD(+) is bound at residue methionine 227.

It belongs to the LDH/MDH superfamily. MDH type 1 family. Homodimer.

It carries out the reaction (S)-malate + NAD(+) = oxaloacetate + NADH + H(+). Functionally, catalyzes the reversible oxidation of malate to oxaloacetate. In Histophilus somni (strain 2336) (Haemophilus somnus), this protein is Malate dehydrogenase.